A 368-amino-acid polypeptide reads, in one-letter code: Agmatine deiminase (368 aa).

Cysteine 357 functions as the Amidino-cysteine intermediate in the catalytic mechanism.

Belongs to the agmatine deiminase family. As to quaternary structure, homodimer.

It catalyses the reaction agmatine + H2O = N-carbamoylputrescine + NH4(+). It participates in amine and polyamine biosynthesis; putrescine biosynthesis via agmatine pathway; N-carbamoylputrescine from agmatine: step 1/1. Mediates the hydrolysis of agmatine into N-carbamoylputrescine in the arginine decarboxylase (ADC) pathway of putrescine biosynthesis, a basic polyamine. The protein is Agmatine deiminase of Stutzerimonas stutzeri (strain A1501) (Pseudomonas stutzeri).